A 300-amino-acid chain; its full sequence is Porphobilinogen deaminase (300 aa).

Residue Cys-239 is modified to S-(dipyrrolylmethanemethyl)cysteine.

This sequence belongs to the HMBS family. Monomer. It depends on dipyrromethane as a cofactor.

It carries out the reaction 4 porphobilinogen + H2O = hydroxymethylbilane + 4 NH4(+). Its pathway is porphyrin-containing compound metabolism; protoporphyrin-IX biosynthesis; coproporphyrinogen-III from 5-aminolevulinate: step 2/4. Tetrapolymerization of the monopyrrole PBG into the hydroxymethylbilane pre-uroporphyrinogen in several discrete steps. This Francisella philomiragia subsp. philomiragia (strain ATCC 25017 / CCUG 19701 / FSC 153 / O#319-036) protein is Porphobilinogen deaminase.